The chain runs to 115 residues: Large ribosomal subunit protein bL19 (115 aa).

The protein belongs to the bacterial ribosomal protein bL19 family.

Functionally, this protein is located at the 30S-50S ribosomal subunit interface and may play a role in the structure and function of the aminoacyl-tRNA binding site. The chain is Large ribosomal subunit protein bL19 from Koribacter versatilis (strain Ellin345).